The sequence spans 445 residues: Tubulin beta-7 chain (445 aa).

8 residues coordinate GTP: Gln-11, Glu-69, Ser-138, Gly-142, Thr-143, Gly-144, Asn-204, and Asn-226. Residue Glu-69 coordinates Mg(2+). Residues 421–445 are disordered; that stretch reads EYQQYQDATAEDEEYEEEEEEEEET. Residues 429–445 show a composition bias toward acidic residues; that stretch reads TAEDEEYEEEEEEEEET.

The protein belongs to the tubulin family. As to quaternary structure, dimer of alpha and beta chains. A typical microtubule is a hollow water-filled tube with an outer diameter of 25 nm and an inner diameter of 15 nM. Alpha-beta heterodimers associate head-to-tail to form protofilaments running lengthwise along the microtubule wall with the beta-tubulin subunit facing the microtubule plus end conferring a structural polarity. Microtubules usually have 13 protofilaments but different protofilament numbers can be found in some organisms and specialized cells. Mg(2+) is required as a cofactor.

It is found in the cytoplasm. It localises to the cytoskeleton. Tubulin is the major constituent of microtubules, a cylinder consisting of laterally associated linear protofilaments composed of alpha- and beta-tubulin heterodimers. Microtubules grow by the addition of GTP-tubulin dimers to the microtubule end, where a stabilizing cap forms. Below the cap, tubulin dimers are in GDP-bound state, owing to GTPase activity of alpha-tubulin. The sequence is that of Tubulin beta-7 chain (TUBB7) from Zea mays (Maize).